Here is a 163-residue protein sequence, read N- to C-terminus: Allophycocyanin alpha-B chain (163 aa).

N71 carries the N4-methylasparagine modification. C81 is a (2R,3E)-phycocyanobilin binding site.

This sequence belongs to the phycobiliprotein family. Post-translationally, contains one covalently linked bilin chromophore.

The protein localises to the plastid. It localises to the chloroplast thylakoid membrane. Its function is as follows. Allophycocyanin is a photosynthetic bile pigment-protein complex with maximum absorption at approximately 650 nanometers. This is Allophycocyanin alpha-B chain (apcD) from Cyanidium caldarium (Red alga).